A 353-amino-acid chain; its full sequence is N-formyl peptide receptor 3 (353 aa).

Over 1–27 (METNFSIPLNETEEVLPEPAGHTVLWI) the chain is Extracellular. N-linked (GlcNAc...) asparagine glycosylation is found at Asn4 and Asn10. Residues 28-50 (FSLLVHGVTFVFGVLGNGLVIWV) form a helical membrane-spanning segment. Over 51 to 61 (AGFRMTRTVNT) the chain is Cytoplasmic. Residues 62-83 (ICYLNLALADFSFSAILPFRMV) form a helical membrane-spanning segment. The Extracellular segment spans residues 84–100 (SVAMREKWPFGSFLCKL). Cysteines 98 and 176 form a disulfide. The helical transmembrane segment at 101-121 (VHVMIDINLFVSVYLITIIAL) threads the bilayer. Over 122–140 (DRCICVLHPAWAQNHRTMS) the chain is Cytoplasmic. The chain crosses the membrane as a helical span at residues 141–162 (LAKRVMTGLWIFTIVLTLPNFI). The Extracellular segment spans residues 163-205 (FWTTISTTNGDTYCIFNFAFWGDTAVERLNVFITMAKVFLILH). Residues 206-226 (FIIGFSVPMSIITVCYGIIAA) form a helical membrane-spanning segment. The Cytoplasmic portion of the chain corresponds to 227–242 (KIHRNHMIKSSRPLRV). A helical membrane pass occupies residues 243 to 266 (FAAVVASFFICWFPYELIGILMAV). Topologically, residues 267–286 (WLKEMLLNGKYKIILVLINP) are extracellular. A helical transmembrane segment spans residues 287-306 (TSSLAFFNSCLNPILYVFMG). At 307-353 (RNFQERLIRSLPTSLERALTEVPDSAQTSNTDTTSASPPEETELQAM) the chain is on the cytoplasmic side. The interval 327–353 (EVPDSAQTSNTDTTSASPPEETELQAM) is disordered. Over residues 331–343 (SAQTSNTDTTSAS) the composition is skewed to polar residues.

Belongs to the G-protein coupled receptor 1 family. Detected in various tissues with highest expression in lung.

Its subcellular location is the cell membrane. In terms of biological role, low affinity receptor for N-formyl-methionyl peptides, which are powerful neutrophils chemotactic factors. Binding of FMLP to the receptor causes activation of neutrophils. This response is mediated via a G-protein that activates a phosphatidylinositol-calcium second messenger system. Acts as a receptor for humanin. This chain is N-formyl peptide receptor 3 (FPR3), found in Homo sapiens (Human).